The following is a 99-amino-acid chain: Aspartyl/glutamyl-tRNA(Asn/Gln) amidotransferase subunit C (99 aa).

This sequence belongs to the GatC family. Heterotrimer of A, B and C subunits.

The enzyme catalyses L-glutamyl-tRNA(Gln) + L-glutamine + ATP + H2O = L-glutaminyl-tRNA(Gln) + L-glutamate + ADP + phosphate + H(+). The catalysed reaction is L-aspartyl-tRNA(Asn) + L-glutamine + ATP + H2O = L-asparaginyl-tRNA(Asn) + L-glutamate + ADP + phosphate + 2 H(+). In terms of biological role, allows the formation of correctly charged Asn-tRNA(Asn) or Gln-tRNA(Gln) through the transamidation of misacylated Asp-tRNA(Asn) or Glu-tRNA(Gln) in organisms which lack either or both of asparaginyl-tRNA or glutaminyl-tRNA synthetases. The reaction takes place in the presence of glutamine and ATP through an activated phospho-Asp-tRNA(Asn) or phospho-Glu-tRNA(Gln). The polypeptide is Aspartyl/glutamyl-tRNA(Asn/Gln) amidotransferase subunit C (Polaromonas naphthalenivorans (strain CJ2)).